We begin with the raw amino-acid sequence, 213 residues long: Transmembrane protein 186 (213 aa).

Residues 1-79 lie on the Mitochondrial matrix side of the membrane; the sequence is MAALLRAVRR…FLSRLKLAQT (79 aa). The helical transmembrane segment at 80-100 threads the bilayer; that stretch reads ALTVVALPPGYYLYSQGLLTL. Residues 101–102 lie on the Mitochondrial intermembrane side of the membrane; it reads NT. Residues 103–123 form a helical membrane-spanning segment; sequence VCLMSGISGFALTMLCWMSYF. Residues 124–213 are Mitochondrial matrix-facing; it reads LRRLVGILYL…QVFGVHQMLK (90 aa).

It belongs to the TMEM186 family. In terms of assembly, part of the mitochondrial complex I assembly/MCIA complex that comprises at least the core subunits TMEM126B, NDUFAF1, ECSIT and ACAD9 and complement subunits such as COA1 and TMEM186. Interacts with MT-ND3.

It localises to the mitochondrion inner membrane. Functionally, as part of the MCIA complex, required for efficient assembly of the mitochondrial complex I. This chain is Transmembrane protein 186, found in Homo sapiens (Human).